Reading from the N-terminus, the 132-residue chain is DNA-directed RNA polymerase subunit omega (132 aa).

This sequence belongs to the RNA polymerase subunit omega family. As to quaternary structure, the RNAP catalytic core consists of 2 alpha, 1 beta, 1 beta' and 1 omega subunit. When a sigma factor is associated with the core the holoenzyme is formed, which can initiate transcription.

It catalyses the reaction RNA(n) + a ribonucleoside 5'-triphosphate = RNA(n+1) + diphosphate. Functionally, promotes RNA polymerase assembly. Latches the N- and C-terminal regions of the beta' subunit thereby facilitating its interaction with the beta and alpha subunits. This chain is DNA-directed RNA polymerase subunit omega, found in Ehrlichia ruminantium (strain Welgevonden).